Consider the following 354-residue polypeptide: UDP-3-O-acylglucosamine N-acyltransferase (354 aa).

His-245 functions as the Proton acceptor in the catalytic mechanism.

It belongs to the transferase hexapeptide repeat family. LpxD subfamily. As to quaternary structure, homotrimer.

The enzyme catalyses a UDP-3-O-[(3R)-3-hydroxyacyl]-alpha-D-glucosamine + a (3R)-hydroxyacyl-[ACP] = a UDP-2-N,3-O-bis[(3R)-3-hydroxyacyl]-alpha-D-glucosamine + holo-[ACP] + H(+). The protein operates within bacterial outer membrane biogenesis; LPS lipid A biosynthesis. Functionally, catalyzes the N-acylation of UDP-3-O-acylglucosamine using 3-hydroxyacyl-ACP as the acyl donor. Is involved in the biosynthesis of lipid A, a phosphorylated glycolipid that anchors the lipopolysaccharide to the outer membrane of the cell. This is UDP-3-O-acylglucosamine N-acyltransferase from Anaeromyxobacter sp. (strain K).